Reading from the N-terminus, the 435-residue chain is tRNA(Ile)-lysidine synthase (435 aa).

Residue 24-29 coordinates ATP; sequence SGGLDS.

Belongs to the tRNA(Ile)-lysidine synthase family.

The protein localises to the cytoplasm. The catalysed reaction is cytidine(34) in tRNA(Ile2) + L-lysine + ATP = lysidine(34) in tRNA(Ile2) + AMP + diphosphate + H(+). Ligates lysine onto the cytidine present at position 34 of the AUA codon-specific tRNA(Ile) that contains the anticodon CAU, in an ATP-dependent manner. Cytidine is converted to lysidine, thus changing the amino acid specificity of the tRNA from methionine to isoleucine. In Chromobacterium violaceum (strain ATCC 12472 / DSM 30191 / JCM 1249 / CCUG 213 / NBRC 12614 / NCIMB 9131 / NCTC 9757 / MK), this protein is tRNA(Ile)-lysidine synthase.